Reading from the N-terminus, the 288-residue chain is Phenazine biosynthesis-like domain-containing protein 2 (288 aa).

Glu46 is an active-site residue.

The protein belongs to the PhzF family.

This chain is Phenazine biosynthesis-like domain-containing protein 2 (Pbld2), found in Mus musculus (Mouse).